The sequence spans 202 residues: CASP-like protein 2B2 (202 aa).

Topologically, residues 1–29 are cytoplasmic; it reads MSYLGVGVSPGNVPVYHGMNLKVIDRRVR. A helical transmembrane segment spans residues 30–50; that stretch reads LAELVLRCVICALGVLAAVLV. The Extracellular portion of the chain corresponds to 51-72; it reads GTDTQVKEIFSIQKKARFTDMK. Residues 73-93 traverse the membrane as a helical segment; it reads ALVFLVVANGIAAAYSLVQGV. At 94–118 the chain is on the cytoplasmic side; that stretch reads RCVVGMVKGSVLFSKPLAWVIFSGD. The helical transmembrane segment at 119-139 threads the bilayer; the sequence is QMMAYLTLSAVAAAVQSASFA. Topologically, residues 140 to 164 are extracellular; the sequence is KLGQPDLQWMKICNMYGKFCNQVGE. The chain crosses the membrane as a helical span at residues 165 to 185; the sequence is GIASALLVSVSMVVLSCISSF. Residues 186-202 are Cytoplasmic-facing; it reads SLFRLYGGNKGKDGARW.

The protein belongs to the Casparian strip membrane proteins (CASP) family. As to quaternary structure, homodimer and heterodimers.

The protein localises to the cell membrane. This is CASP-like protein 2B2 from Populus trichocarpa (Western balsam poplar).